The primary structure comprises 473 residues: Photosystem II CP43 reaction center protein (473 aa).

Residues 1-14 constitute a propeptide that is removed on maturation; sequence MKILYSLRRFYHVE. At T15 the chain carries N-acetylthreonine. A Phosphothreonine modification is found at T15. Helical transmembrane passes span 69 to 93, 134 to 155, 178 to 200, 255 to 275, and 291 to 312; these read LFEV…PHLA, LLGP…KDRN, KALY…RKIT, KPFA…LSYS, and WFNN…ASQA. E367 provides a ligand contact to [CaMn4O5] cluster. Residues 447–471 form a helical membrane-spanning segment; sequence RARAAAAGFEKGIDRDLEPVLYMNP.

It belongs to the PsbB/PsbC family. PsbC subfamily. PSII is composed of 1 copy each of membrane proteins PsbA, PsbB, PsbC, PsbD, PsbE, PsbF, PsbH, PsbI, PsbJ, PsbK, PsbL, PsbM, PsbT, PsbX, PsbY, PsbZ, Psb30/Ycf12, at least 3 peripheral proteins of the oxygen-evolving complex and a large number of cofactors. It forms dimeric complexes. Binds multiple chlorophylls and provides some of the ligands for the Ca-4Mn-5O cluster of the oxygen-evolving complex. It may also provide a ligand for a Cl- that is required for oxygen evolution. PSII binds additional chlorophylls, carotenoids and specific lipids. serves as cofactor.

It localises to the plastid. Its subcellular location is the chloroplast thylakoid membrane. One of the components of the core complex of photosystem II (PSII). It binds chlorophyll and helps catalyze the primary light-induced photochemical processes of PSII. PSII is a light-driven water:plastoquinone oxidoreductase, using light energy to abstract electrons from H(2)O, generating O(2) and a proton gradient subsequently used for ATP formation. This chain is Photosystem II CP43 reaction center protein, found in Brachypodium distachyon (Purple false brome).